The following is a 179-amino-acid chain: 3-hydroxyanthranilate 3,4-dioxygenase 2 (179 aa).

R44 serves as a coordination point for O2. 3 residues coordinate Fe cation: H48, E60, and H99. Residue E60 participates in substrate binding. R103 and E113 together coordinate substrate.

It belongs to the 3-HAO family. Fe(2+) is required as a cofactor.

Its subcellular location is the cytoplasm. It catalyses the reaction 3-hydroxyanthranilate + O2 = (2Z,4Z)-2-amino-3-carboxymuconate 6-semialdehyde. It participates in cofactor biosynthesis; NAD(+) biosynthesis; quinolinate from L-kynurenine: step 3/3. Functionally, catalyzes the oxidative ring opening of 3-hydroxyanthranilate to 2-amino-3-carboxymuconate semialdehyde, which spontaneously cyclizes to quinolinate. This Aspergillus oryzae (strain ATCC 42149 / RIB 40) (Yellow koji mold) protein is 3-hydroxyanthranilate 3,4-dioxygenase 2 (bna1-2).